The primary structure comprises 89 residues: UPF0213 protein LMOf2365_0181 (89 aa).

The region spanning 5–80 (SEHFFYVLKC…KKLSRKNKDA (76 aa)) is the GIY-YIG domain.

The protein belongs to the UPF0213 family.

In Listeria monocytogenes serotype 4b (strain F2365), this protein is UPF0213 protein LMOf2365_0181.